The primary structure comprises 221 residues: Proline-rich protein 20A (221 aa).

2 disordered regions span residues 1-103 (MEEP…QRQG) and 137-174 (SLSETGPPPGTVQEGPGPDVAQPELGFQEPPAAPGPQA). The segment covering 42 to 53 (PAQPAQPAKPIA) has biased composition (low complexity). Positions 63 to 72 (PARPESPPPA) are enriched in pro residues. Residues 75–93 (GRRRGGSRRPGRGRGRRAG) are compositionally biased toward basic residues.

Belongs to the PRR20 family.

This chain is Proline-rich protein 20A (PRR20A), found in Homo sapiens (Human).